Here is a 365-residue protein sequence, read N- to C-terminus: Eukaryotic translation initiation factor 3 subunit H (365 aa).

In terms of domain architecture, MPN spans isoleucine 15–alanine 166.

It belongs to the eIF-3 subunit H family. As to quaternary structure, component of the eukaryotic translation initiation factor 3 (eIF-3) complex.

Its subcellular location is the cytoplasm. Component of the eukaryotic translation initiation factor 3 (eIF-3) complex, which is involved in protein synthesis of a specialized repertoire of mRNAs and, together with other initiation factors, stimulates binding of mRNA and methionyl-tRNAi to the 40S ribosome. The eIF-3 complex specifically targets and initiates translation of a subset of mRNAs involved in cell proliferation. The polypeptide is Eukaryotic translation initiation factor 3 subunit H (Caenorhabditis elegans).